Reading from the N-terminus, the 324-residue chain is 1-deoxyxylulose-5-phosphate synthase YajO (324 aa).

Tyr61 (proton donor) is an active-site residue.

Belongs to the aldo/keto reductase family. Aldo/keto reductase 2 subfamily.

It carries out the reaction D-ribulose 5-phosphate + AH2 = 1-deoxy-D-xylulose 5-phosphate + A + H2O. NADH, NADPH or ATP do not increase activity. In terms of biological role, catalyzes the conversion of ribulose 5-phosphate (Ru5P) to 1-deoxy-D-xylulose 5-phosphate (DXP), providing a direct route from pentoses to terpenes. May play a role in biosynthesis of DXP under conditions of thiamine starvation. In Escherichia coli (strain K12), this protein is 1-deoxyxylulose-5-phosphate synthase YajO (yajO).